A 196-amino-acid chain; its full sequence is ATP-dependent Clp protease proteolytic subunit (196 aa).

S101 functions as the Nucleophile in the catalytic mechanism. H126 is an active-site residue.

Belongs to the peptidase S14 family. As to quaternary structure, component of the chloroplastic Clp protease core complex.

It localises to the plastid. It is found in the chloroplast stroma. It carries out the reaction Hydrolysis of proteins to small peptides in the presence of ATP and magnesium. alpha-casein is the usual test substrate. In the absence of ATP, only oligopeptides shorter than five residues are hydrolyzed (such as succinyl-Leu-Tyr-|-NHMec, and Leu-Tyr-Leu-|-Tyr-Trp, in which cleavage of the -Tyr-|-Leu- and -Tyr-|-Trp bonds also occurs).. Cleaves peptides in various proteins in a process that requires ATP hydrolysis. Has a chymotrypsin-like activity. Plays a major role in the degradation of misfolded proteins. This is ATP-dependent Clp protease proteolytic subunit from Spinacia oleracea (Spinach).